The chain runs to 332 residues: o-succinylbenzoate synthase (332 aa).

The active-site Proton donor is the lysine 135. Mg(2+) contacts are provided by aspartate 163, glutamate 192, and aspartate 215. Lysine 241 functions as the Proton acceptor in the catalytic mechanism.

Belongs to the mandelate racemase/muconate lactonizing enzyme family. MenC type 1 subfamily. A divalent metal cation serves as cofactor.

The catalysed reaction is (1R,6R)-6-hydroxy-2-succinyl-cyclohexa-2,4-diene-1-carboxylate = 2-succinylbenzoate + H2O. It functions in the pathway quinol/quinone metabolism; 1,4-dihydroxy-2-naphthoate biosynthesis; 1,4-dihydroxy-2-naphthoate from chorismate: step 4/7. It participates in quinol/quinone metabolism; menaquinone biosynthesis. In terms of biological role, converts 2-succinyl-6-hydroxy-2,4-cyclohexadiene-1-carboxylate (SHCHC) to 2-succinylbenzoate (OSB). The sequence is that of o-succinylbenzoate synthase from Vibrio cholerae serotype O1 (strain ATCC 39315 / El Tor Inaba N16961).